Reading from the N-terminus, the 126-residue chain is Glycine cleavage system H protein (126 aa).

Residues 24-106 (TVTVGITDHA…YGEGWMYRIK (83 aa)) enclose the Lipoyl-binding domain. K65 is subject to N6-lipoyllysine.

The protein belongs to the GcvH family. In terms of assembly, the glycine cleavage system is composed of four proteins: P, T, L and H. (R)-lipoate is required as a cofactor.

Functionally, the glycine cleavage system catalyzes the degradation of glycine. The H protein shuttles the methylamine group of glycine from the P protein to the T protein. This Psychrobacter sp. (strain PRwf-1) protein is Glycine cleavage system H protein.